We begin with the raw amino-acid sequence, 181 residues long: Trafficking protein particle complex subunit 3-like protein (181 aa).

Cys68 is lipidated: S-palmitoyl cysteine.

This sequence belongs to the TRAPP small subunits family. BET3 subfamily. In terms of assembly, homodimer. Component of the multisubunit TRAPP (transport protein particle) complex, which includes at least TRAPPC2, TRAPPC2L, TRAPPC3, TRAPPC3L, TRAPPC4, TRAPPC5, TRAPPC8, TRAPPC9, TRAPPC10, TRAPPC11 and TRAPPC12.

The protein localises to the golgi apparatus. It is found in the cis-Golgi network. It localises to the endoplasmic reticulum. Its function is as follows. May play a role in vesicular transport from endoplasmic reticulum to Golgi. This is Trafficking protein particle complex subunit 3-like protein (TRAPPC3L) from Homo sapiens (Human).